Here is a 342-residue protein sequence, read N- to C-terminus: MRLAVIGGDGIGPEVVAEGLRVLRAVHPKVDTTEYDLGARRWHETGETLPDSVLEELRGHDAILLGAVGDPGVPSGVLERGLLLRLRFEFDHHVNLRPVRLYPGVRSPLAGDPAIDMIVVREGTEGPYAGAGGVLRKGTPHEVATEESLNTRYGVERVVRDAFRRADRRERRHLTLVHKNNVLTKAGDLWSRTVAEVAPEFPDVRVDYQHVDAASMFFVTDPGRFDVVVTDNMFGDILTDIGAAITGGIGLAASGNLDPSGVHPSMFEPVHGSAPDIAGRQLADPTATVASVAMLLDHLGHAEEAAKVEAAVASSLADRAAAGAAQPSTRERGEDLAARAAG.

Substrate is bound by residues R87, R97, R121, and D212. Residues D212, D236, and D240 each contribute to the Mg(2+) site. G272–D284 is an NAD(+) binding site. Residues R319–S328 show a composition bias toward low complexity. The tract at residues R319–G342 is disordered. Residues T329–G342 show a composition bias toward basic and acidic residues.

It belongs to the isocitrate and isopropylmalate dehydrogenases family. LeuB type 2 subfamily. As to quaternary structure, homodimer. Mg(2+) is required as a cofactor. It depends on Mn(2+) as a cofactor.

It localises to the cytoplasm. The enzyme catalyses (2R,3S)-3-isopropylmalate + NAD(+) = 4-methyl-2-oxopentanoate + CO2 + NADH. Its pathway is amino-acid biosynthesis; L-leucine biosynthesis; L-leucine from 3-methyl-2-oxobutanoate: step 3/4. Catalyzes the oxidation of 3-carboxy-2-hydroxy-4-methylpentanoate (3-isopropylmalate) to 3-carboxy-4-methyl-2-oxopentanoate. The product decarboxylates to 4-methyl-2 oxopentanoate. This chain is 3-isopropylmalate dehydrogenase, found in Frankia casuarinae (strain DSM 45818 / CECT 9043 / HFP020203 / CcI3).